The sequence spans 390 residues: Protein STRICTOSIDINE SYNTHASE-LIKE 3 (390 aa).

The first 25 residues, Met1 to Ser25, serve as a signal peptide directing secretion. Asn95 and Asn108 each carry an N-linked (GlcNAc...) asparagine glycan.

Belongs to the strictosidine synthase family.

Its subcellular location is the vacuole. The polypeptide is Protein STRICTOSIDINE SYNTHASE-LIKE 3 (Arabidopsis thaliana (Mouse-ear cress)).